Reading from the N-terminus, the 88-residue chain is MPNIKSAAKRVEVTRKRTMRNTRIKSALKTTIRKFEEALKNASHDEARLKLRNAIRAIDKAVTKGVLHKNTASRKKSRLTKRFNKLTG.

Positions 69–88 are disordered; it reads KNTASRKKSRLTKRFNKLTG. Positions 71 to 88 are enriched in basic residues; it reads TASRKKSRLTKRFNKLTG.

The protein belongs to the bacterial ribosomal protein bS20 family.

Binds directly to 16S ribosomal RNA. This chain is Small ribosomal subunit protein bS20, found in Pelotomaculum thermopropionicum (strain DSM 13744 / JCM 10971 / SI).